Consider the following 557-residue polypeptide: Vacuolar protein sorting-associated protein 30 (557 aa).

Disordered regions lie at residues 93–149 (DDDN…ENQQ) and 218–238 (NKEI…SEKE). Acidic residues predominate over residues 135–147 (DEEEQEATDEDEN). The residue at position 142 (T142) is a Phosphothreonine. A coiled-coil region spans residues 189 to 322 (LINRLKSEYD…QLDKLRKINI (134 aa)). Residues 320–539 (INIFNATFKI…LAFSSNLLSK (220 aa)) are BARA. A required for membrane-association, autophagic function during starvation and normal autophagosome morphology region spans residues 515–540 (WTTAMKFLLTNVKWLLAFSSNLLSKS).

The protein belongs to the beclin family. As to quaternary structure, component of the autophagy-specific VPS34 PI3-kinase complex I composed of VPS15, VPS30, VPS34, ATG14 and ATG38; and of the VPS34 PI3-kinase complex II composed of VPS15, VPS30, VPS34 and VPS38.

Its subcellular location is the endosome membrane. The protein localises to the vacuole membrane. The protein resides in the preautophagosomal structure membrane. In terms of biological role, required for cytoplasm to vacuole transport (Cvt), autophagy, nucleophagy, and mitophagy, as a part of the autophagy-specific VPS34 PI3-kinase complex I. This complex is essential to recruit the ATG8-phosphatidylinositol conjugate and the ATG12-ATG5 conjugate to the pre-autophagosomal structure. Also involved in endosome-to-Golgi retrograde transport as part of the VPS34 PI3-kinase complex II. This second complex is required for the endosome-to-Golgi retrieval of PEP1 and KEX2, and the recruitment of VPS5 and VPS7, two components of the retromer complex, to endosomal membranes (probably through the synthesis of a specific pool of phosphatidylinositol 3-phosphate recruiting the retromer to the endosomes). Also plays a role in regulation of filamentous growth. The chain is Vacuolar protein sorting-associated protein 30 from Saccharomyces cerevisiae (strain ATCC 204508 / S288c) (Baker's yeast).